A 1304-amino-acid chain; its full sequence is MAKIAKTHEDIEAQIREIQGKKAALDEAQGVGLDSTGYYDQEIYGGSDSRFAGYVTSIAATELEDDDDDYSSSTSLLGQKKPGYHAPVALLNDIPQSTEQYDPFAEHRPPKIADREDEYKKHRRTMIISPERLDPFADGGKTPDPKMNARTYMDVMREQHLTKEEREIRQQLAEKAKAGELKVVNGAAASQPPSKRKRRWDQTADQTPGATPKKLSSWDQAETPGHTPSLRWDETPGRAKGSETPGATPGSKIWDPTPSHTPAGAATPGRGDTPGHATPGHGGATSSARKNRWDETPKTERDTPGHGSGWAETPRTDRGGDSIGETPTPGASKRKSRWDETPASQMGGSTPVLTPGKTPIGTPAMNMATPTPGHIMSMTPEQLQAWRWEREIDERNRPLSDEELDAMFPEGYKVLPPPAGYVPIRTPARKLTATPTPLGGMTGFHMQTEDRTMKSVNDQPSGNLPFLKPDDIQYFDKLLVDVDESTLSPEEQKERKIMKLLLKIKNGTPPMRKAALRQITDKAREFGAGPLFNQILPLLMSPTLEDQERHLLVKVIDRILYKLDDLVRPYVHKILVVIEPLLIDEDYYARVEGREIISNLAKAAGLATMISTMRPDIDNMDEYVRNTTARAFAVVASALGIPSLLPFLKAVCKSKKSWQARHTGIKIVQQIAILMGCAILPHLRSLVEIIEHGLVDEQQKVRTISALAIAALAEAATPYGIESFDSVLKPLWKGIRQHRGKGLAAFLKAIGYLIPLMDAEYANYYTREVMLILIREFQSPDEEMKKIVLKVVKQCCGTDGVEANYIKTEILPPFFKHFWQHRMALDRRNYRQLVDTTVELANKVGAAEIISRIVDDLKDEAEQYRKMVMETIEKIMGNLGAADIDHKLEEQLIDGILYAFQEQTTEDSVMLNGFGTVVNALGKRVKPYLPQICGTVLWRLNNKSAKVRQQAADLISRTAVVMKTCQEEKLMGHLGVVLYEYLGEEYPEVLGSILGALKAIVNVIGMHKMTPPIKDLLPRLTPILKNRHEKVQENCIDLVGRIADRGAEYVSAREWMRICFELLELLKAHKKAIRRATVNTFGYIAKAIGPHDVLATLLNNLKVQERQNRVCTTVAIAIVAETCSPFTVLPALMNEYRVPELNVQNGVLKSLSFLFEYIGEMGKDYIYAVTPLLEDALMDRDLVHRQTASAVVQHMSLGVYGFGCEDSLNHLLNYVWPNVFETSPHVIQAVMGALEGLRVAIGPCRMLQYCLQGLFHPARKVRDVYWKIYNSIYIGSQDALIAHYPRIYNDDKNTYIRYDLDYIL.

Disordered stretches follow at residues Gln-100–Tyr-119 and Arg-124–Asn-148. Over residues Phe-104–Tyr-119 the composition is skewed to basic and acidic residues. Thr-125 bears the Phosphothreonine mark. Ser-129 is subject to Phosphoserine. Lys-141 is subject to N6-acetyllysine. At Thr-142 the chain carries Phosphothreonine. Arg-157 is subject to Citrulline. Residues Leu-172–Ile-360 are disordered. Ser-194 carries the post-translational modification Phosphoserine. A phosphothreonine mark is found at Thr-203, Thr-207, and Thr-211. Lys-214 bears the N6-acetyllysine; alternate mark. Lys-214 participates in a covalent cross-link: Glycyl lysine isopeptide (Lys-Gly) (interchain with G-Cter in SUMO2); alternate. A phosphothreonine mark is found at Thr-223 and Thr-227. The interval Thr-223–Glu-491 is interaction with PPP1R8. Ser-229 is modified (phosphoserine). Over residues Arg-231–Gly-241 the composition is skewed to basic and acidic residues. Phosphothreonine is present on residues Thr-235, Thr-244, Thr-248, Thr-257, Thr-261, Thr-267, Thr-273, and Thr-278. Phosphoserine is present on Ser-287. A compositionally biased stretch (basic and acidic residues) spans Asn-291–Pro-304. Phosphothreonine occurs at positions 296, 299, 303, and 313. Ser-322 is modified (phosphoserine). Phosphothreonine occurs at positions 326 and 328. Ser-332 carries the post-translational modification Phosphoserine. A Phosphothreonine modification is found at Thr-341. Over residues Pro-342 to Val-352 the composition is skewed to polar residues. Phosphoserine is present on residues Ser-344 and Ser-349. Phosphothreonine is present on residues Thr-350 and Thr-354. Ser-400 carries the post-translational modification Phosphoserine. Residue Lys-413 forms a Glycyl lysine isopeptide (Lys-Gly) (interchain with G-Cter in SUMO2); alternate linkage. Residue Lys-413 forms a Glycyl lysine isopeptide (Lys-Gly) (interchain with G-Cter in SUMO1); alternate linkage. Residue Thr-426 is modified to Phosphothreonine. Residue Lys-430 forms a Glycyl lysine isopeptide (Lys-Gly) (interchain with G-Cter in SUMO2) linkage. Thr-434 carries the phosphothreonine; by DYRK1A modification. Thr-436 bears the Phosphothreonine mark. Ser-488 carries the post-translational modification Phosphoserine. 11 HEAT repeats span residues Gly-529–Arg-568, Pro-569–Ala-603, Ala-604–Ile-641, Ser-643–Cys-677, Leu-680–Pro-718, Asn-763–Val-801, Lys-843–Ala-881, Thr-1010–Glu-1048, Ala-1052–Pro-1090, Thr-1122–Glu-1160, and Lys-1163–Gly-1201. The interaction with PHF5A stretch occupies residues Gln-547–His-550. 2 positions are modified to N6-acetyllysine: Lys-554 and Lys-562. Positions Glu-1156–Tyr-1157 are interaction with PHF5A. Residues Gln-1248–Leu-1304 are interaction with SF3B3 and SF3B5.

It belongs to the SF3B1 family. As to quaternary structure, component of the 17S U2 SnRNP complex, a ribonucleoprotein complex that contains small nuclear RNA (snRNA) U2 and a number of specific proteins. Part of the SF3B subcomplex of the 17S U2 SnRNP complex. SF3B associates with the splicing subcomplex SF3A and a 12S RNA unit to form the U2 small nuclear ribonucleoproteins complex (U2 snRNP). Within the SF3B complex, interacts directly (via HEAT domain) with SF3B3, SF3B5, SF3B6 and (via HEAT domain) with PHF5A. The SF3B subcomplex interacts with U2AF2. Identified in the spliceosome C complex. Component of the minor (U12-type spliceosome) spliceosome. Within the minor spliceosome complex, interacts with SCNM1 and CRIPT. Component of the B-WICH complex, at least composed of SMARCA5/SNF2H, BAZ1B/WSTF, SF3B1, DEK, MYO1C, ERCC6, MYBBP1A and DDX21. Phosphorylated form interacts with PPP1R8. Interacts with PQBP1. Interacts with RBM17. Interacts with RBM39. Interacts with SETX. Interacts with RBM15. Interacts with USH1G. Interacts with SDE2. Interacts with U2AF1. Interacts with CACTIN. Interacts with ZRSR1. Interacts with CYREN. In terms of processing, phosphorylated. Phosphorylation occurs concomitantly with the splicing catalytic steps. Phosphorylation on Thr-244, Thr-248 and Thr-313 by cyclin-dependent kinases promotes interaction with PPP1R8 during mitosis. Post-translationally, citrullinated by PADI4. In terms of tissue distribution, ubiquitous.

The protein resides in the nucleus. Its subcellular location is the nucleus speckle. Component of the 17S U2 SnRNP complex of the spliceosome, a large ribonucleoprotein complex that removes introns from transcribed pre-mRNAs. The 17S U2 SnRNP complex (1) directly participates in early spliceosome assembly and (2) mediates recognition of the intron branch site during pre-mRNA splicing by promoting the selection of the pre-mRNA branch-site adenosine, the nucleophile for the first step of splicing. Within the 17S U2 SnRNP complex, SF3B1 is part of the SF3B subcomplex, which is required for 'A' complex assembly formed by the stable binding of U2 snRNP to the branchpoint sequence in pre-mRNA. Sequence independent binding of SF3A and SF3B subcomplexes upstream of the branch site is essential, it may anchor U2 snRNP to the pre-mRNA. May also be involved in the assembly of the 'E' complex. Also acts as a component of the minor spliceosome, which is involved in the splicing of U12-type introns in pre-mRNAs. Together with other U2 snRNP complex components may also play a role in the selective processing of microRNAs (miRNAs) from the long primary miRNA transcript, pri-miR-17-92. In Mus musculus (Mouse), this protein is Splicing factor 3B subunit 1.